The sequence spans 86 residues: Cerebrin prohormone (86 aa).

The signal sequence occupies residues 1-27 (MFGYRSLLVLLVTLSLCLLLQSSHCSA). A propeptide spanning residues 28–64 (VRTYGNDLDARARREIISLAARLIKLSMYGPEDDSFV) is cleaved from the precursor. Ile83 is subject to Isoleucine amide.

As to expression, expressed only in cerebral ganglion.

It localises to the secreted. In terms of biological role, may function as a hormone and may play a neuromodulatory role. This is Cerebrin prohormone (CBPH) from Aplysia californica (California sea hare).